Reading from the N-terminus, the 200-residue chain is Inner membrane-spanning protein YciB (200 aa).

The next 6 membrane-spanning stretches (helical) occupy residues 1 to 21 (MPPL…FFAN), 37 to 57 (IGAP…IALA), 66 to 86 (LAIM…LTLW), 103 to 123 (LFGG…GYVF), 136 to 156 (KLTL…EIVW), and 167 to 187 (FKVW…MPLI).

The protein belongs to the YciB family.

It localises to the cell inner membrane. Its function is as follows. Plays a role in cell envelope biogenesis, maintenance of cell envelope integrity and membrane homeostasis. This Brucella melitensis biotype 1 (strain ATCC 23456 / CCUG 17765 / NCTC 10094 / 16M) protein is Inner membrane-spanning protein YciB.